The sequence spans 168 residues: MEERSDSEPTPGCSGPGPAPVRDGGGAHTWAPEDAWMGTHPKYLEMMELDIGDATQVYIAFLVYLDLMESKSWHEVNCVGIPELQLICLLGTEIEGEGLQTVVPTPISASLSHNRIREILKASRKLQGDPELPMSFTLAIVESDSTIVYYKLTDGFMLPDPQNISLRR.

Positions 1–32 are disordered; it reads MEERSDSEPTPGCSGPGPAPVRDGGGAHTWAP. 2 positions are modified to phosphoserine: S7 and S165.

The protein belongs to the SEN15 family. In terms of assembly, homodimer. tRNA splicing endonuclease is a heterotetramer composed of TSEN2, TSEN15, TSEN34/LENG5 and TSEN54. tRNA splicing endonuclease complex also contains proteins of the pre-mRNA 3' end processing machinery such as CLP1, CPSF1, CPSF4 and CSTF2.

The protein localises to the nucleus. The protein resides in the nucleolus. In terms of biological role, non-catalytic subunit of the tRNA-splicing endonuclease complex, a complex responsible for identification and cleavage of the splice sites in pre-tRNA. It cleaves pre-tRNA at the 5' and 3' splice sites to release the intron. The products are an intron and two tRNA half-molecules bearing 2',3' cyclic phosphate and 5'-OH termini. There are no conserved sequences at the splice sites, but the intron is invariably located at the same site in the gene, placing the splice sites an invariant distance from the constant structural features of the tRNA body. The tRNA splicing endonuclease is also involved in mRNA processing via its association with pre-mRNA 3'-end processing factors, establishing a link between pre-tRNA splicing and pre-mRNA 3'-end formation, suggesting that the endonuclease subunits function in multiple RNA-processing events. The chain is tRNA-splicing endonuclease subunit Sen15 (Tsen15) from Mus musculus (Mouse).